The primary structure comprises 193 residues: Thioredoxin peroxidase (193 aa).

Residues 3 to 161 form the Thioredoxin domain; it reads AVVGKLAPSF…ALRLLDAFQF (159 aa). The Cysteine sulfenic acid (-SOH) intermediate role is filled by Cys-48.

This sequence belongs to the peroxiredoxin family. AhpC/Prx1 subfamily. In terms of assembly, homodimer; disulfide-linked, upon oxidation.

It carries out the reaction a hydroperoxide + [thioredoxin]-dithiol = an alcohol + [thioredoxin]-disulfide + H2O. Functionally, thiol-specific peroxidase that catalyzes the reduction of hydrogen peroxide and organic hydroperoxides to water and alcohols, respectively. Plays a role in cell protection against oxidative stress by detoxifying peroxides and as sensor of hydrogen peroxide-mediated signaling events. This chain is Thioredoxin peroxidase (TPX), found in Echinococcus granulosus (Hydatid tapeworm).